The chain runs to 305 residues: Acyl transferase (305 aa).

Residues Ser116, Asp213, and His243 each act as charge relay system in the active site.

It belongs to the LuxD family.

The protein operates within lipid metabolism; fatty acid reduction for biolumincescence. Functionally, acyl transferase is part of the fatty acid reductase system required for aldehyde biosynthesis; it produces fatty acids for the luminescent reaction. This chain is Acyl transferase, found in Photobacterium leiognathi.